The chain runs to 229 residues: Rab-like protein 2A (229 aa).

Residues G28 to S35, D76 to Q80, and N133 to D136 contribute to the GTP site. Residues N200–S229 are disordered.

The protein belongs to the small GTPase superfamily. Rab family. Interacts with IFT27, IFT81, IFT172, ATP6V1E1, HK1, LDHC, MAPRE1 and HSPA2.

Its function is as follows. Plays an essential role in male fertility, sperm intra-flagellar transport, and tail assembly. Binds, in a GTP-regulated manner, to a specific set of effector proteins including key proteins involved in cilia development and function and delivers them into the growing sperm tail. The chain is Rab-like protein 2A (RABL2A) from Pongo abelii (Sumatran orangutan).